A 298-amino-acid chain; its full sequence is MPKLLVIFNIIYPLQSLKKDTFNFWWSFQKWKYNKTMSGLRQVLDGKIAIITGGASGIGAEAVRLFTDHGAKVVIVDIQEELGQNLAVSIGLDKASFYRCNVTDETDVENAVKFTVEKHGKLDVLFSNAGVLEAFGSVLDLDLEAFDRTMAVNVRGAAAFIKHAARSMVASGTRGSIVCTTSIAAEIGGPGPHSYTASKHALLGLIRSACAGLGQYGIRVNGVAPYGVATGMTSAYNEEAVKMLEEYGEALGNLKGVVLKARHIAEAALFLASDDSVYISGQNLVVDGGFSVVKLMTT.

50–74 lines the NAD(+) pocket; that stretch reads IITGGASGIGAEAVRLFTDHGAKVV. S182 lines the substrate pocket. The active-site Proton acceptor is the Y195.

The protein belongs to the short-chain dehydrogenases/reductases (SDR) family.

The sequence is that of Short-chain dehydrogenase reductase 4 (SDR4) from Arabidopsis thaliana (Mouse-ear cress).